The primary structure comprises 188 residues: Elongation factor P (188 aa).

Lys34 is modified (N6-(3,6-diaminohexanoyl)-5-hydroxylysine).

Belongs to the elongation factor P family. Post-translationally, may be beta-lysylated on the epsilon-amino group of Lys-34 by the combined action of EpmA and EpmB, and then hydroxylated on the C5 position of the same residue by EpmC (if this protein is present). Lysylation is critical for the stimulatory effect of EF-P on peptide-bond formation. The lysylation moiety may extend toward the peptidyltransferase center and stabilize the terminal 3-CCA end of the tRNA. Hydroxylation of the C5 position on Lys-34 may allow additional potential stabilizing hydrogen-bond interactions with the P-tRNA.

The protein resides in the cytoplasm. Its pathway is protein biosynthesis; polypeptide chain elongation. In terms of biological role, involved in peptide bond synthesis. Alleviates ribosome stalling that occurs when 3 or more consecutive Pro residues or the sequence PPG is present in a protein, possibly by augmenting the peptidyl transferase activity of the ribosome. Modification of Lys-34 is required for alleviation. The sequence is that of Elongation factor P from Actinobacillus succinogenes (strain ATCC 55618 / DSM 22257 / CCUG 43843 / 130Z).